A 66-amino-acid polypeptide reads, in one-letter code: UPF0337 protein SpyM3_1723 (66 aa).

Over residues 1-10 the composition is skewed to basic and acidic residues; it reads MSEEKLKSKI. Positions 1-23 are disordered; sequence MSEEKLKSKIEQASGGLKEGAGK.

The protein belongs to the UPF0337 (CsbD) family.

In Streptococcus pyogenes serotype M3 (strain ATCC BAA-595 / MGAS315), this protein is UPF0337 protein SpyM3_1723.